The following is a 1415-amino-acid chain: DNA-directed RNA polymerase subunit beta' (1415 aa).

Positions 72, 74, 87, and 90 each coordinate Zn(2+). Residues aspartate 463, aspartate 465, and aspartate 467 each coordinate Mg(2+). 4 residues coordinate Zn(2+): cysteine 811, cysteine 885, cysteine 892, and cysteine 895.

It belongs to the RNA polymerase beta' chain family. As to quaternary structure, the RNAP catalytic core consists of 2 alpha, 1 beta, 1 beta' and 1 omega subunit. When a sigma factor is associated with the core the holoenzyme is formed, which can initiate transcription. It depends on Mg(2+) as a cofactor. The cofactor is Zn(2+).

The enzyme catalyses RNA(n) + a ribonucleoside 5'-triphosphate = RNA(n+1) + diphosphate. In terms of biological role, DNA-dependent RNA polymerase catalyzes the transcription of DNA into RNA using the four ribonucleoside triphosphates as substrates. The polypeptide is DNA-directed RNA polymerase subunit beta' (Cereibacter sphaeroides (strain ATCC 17025 / ATH 2.4.3) (Rhodobacter sphaeroides)).